The following is a 103-amino-acid chain: Co-chaperonin GroES (103 aa).

It belongs to the GroES chaperonin family. Heptamer of 7 subunits arranged in a ring. Interacts with the chaperonin GroEL.

It is found in the cytoplasm. In terms of biological role, together with the chaperonin GroEL, plays an essential role in assisting protein folding. The GroEL-GroES system forms a nano-cage that allows encapsulation of the non-native substrate proteins and provides a physical environment optimized to promote and accelerate protein folding. GroES binds to the apical surface of the GroEL ring, thereby capping the opening of the GroEL channel. The protein is Co-chaperonin GroES of Crocosphaera subtropica (strain ATCC 51142 / BH68) (Cyanothece sp. (strain ATCC 51142)).